A 207-amino-acid polypeptide reads, in one-letter code: Probable molybdenum cofactor guanylyltransferase (207 aa).

GTP-binding positions include 9–11, Lys21, and Asp97; that span reads LAG. Asp97 provides a ligand contact to Mg(2+).

It belongs to the MobA family. Requires Mg(2+) as cofactor.

Its subcellular location is the cytoplasm. The catalysed reaction is Mo-molybdopterin + GTP + H(+) = Mo-molybdopterin guanine dinucleotide + diphosphate. Its function is as follows. Transfers a GMP moiety from GTP to Mo-molybdopterin (Mo-MPT) cofactor (Moco or molybdenum cofactor) to form Mo-molybdopterin guanine dinucleotide (Mo-MGD) cofactor. The sequence is that of Probable molybdenum cofactor guanylyltransferase from Trichormus variabilis (strain ATCC 29413 / PCC 7937) (Anabaena variabilis).